Here is a 373-residue protein sequence, read N- to C-terminus: MTVDLDQYAKPGKDYYLALGLEGSANKLGVGVIKHNLGQLSLDNRAEILSNVRDTYVTPPGEGFLPRDTARHHRNWAVRIIKKALIEAKVKGSDLDCICFTQGPGMGAPLQSVVIAARTLSQLWDLPLVGVNHCVGHIEMGREITGADNPVVLYVSGGNTQVIAYSRQRYRIFGETLDIAIGNCLDRFARTLRIPNEPAPGYNIEQMAKKGKHLVPLPYTVKGMDLSMSGILAHVDSLAKDLFAENKNKKLIDDETGEQITSEDLCFSLQETLFSMLVEITERAMAHVQSNQVLIVGGVGSNERLQQMMELMVNDRKNGSIFATDERFCIDNGIMIAHAGLLGYRMGQTNELWNTVCTQRFRTDEVFVKWRDD.

The a divalent metal cation site is built by His-133, His-137, and Tyr-154. Residues 154–158 (YVSGG), Asp-186, Gly-201, Glu-205, and Asn-302 contribute to the substrate site. Position 331 (Asp-331) interacts with a divalent metal cation.

The protein belongs to the KAE1 / TsaD family. As to quaternary structure, component of the EKC/KEOPS complex composed of at least BUD32, CGI121, GON7, KAE1 and PCC1; the whole complex dimerizes. A divalent metal cation serves as cofactor.

The protein localises to the cytoplasm. It localises to the nucleus. The enzyme catalyses L-threonylcarbamoyladenylate + adenosine(37) in tRNA = N(6)-L-threonylcarbamoyladenosine(37) in tRNA + AMP + H(+). Component of the EKC/KEOPS complex that is required for the formation of a threonylcarbamoyl group on adenosine at position 37 (t(6)A37) in tRNAs that read codons beginning with adenine. The complex is probably involved in the transfer of the threonylcarbamoyl moiety of threonylcarbamoyl-AMP (TC-AMP) to the N6 group of A37. KAE1 likely plays a direct catalytic role in this reaction, but requires other protein(s) of the complex to fulfill this activity. The EKC/KEOPS complex also promotes both telomere uncapping and telomere elongation. The complex is required for efficient recruitment of transcriptional coactivators. The sequence is that of tRNA N6-adenosine threonylcarbamoyltransferase from Debaryomyces hansenii (strain ATCC 36239 / CBS 767 / BCRC 21394 / JCM 1990 / NBRC 0083 / IGC 2968) (Yeast).